The chain runs to 289 residues: ATP synthase gamma chain (289 aa).

Belongs to the ATPase gamma chain family. As to quaternary structure, F-type ATPases have 2 components, CF(1) - the catalytic core - and CF(0) - the membrane proton channel. CF(1) has five subunits: alpha(3), beta(3), gamma(1), delta(1), epsilon(1). CF(0) has three main subunits: a, b and c.

The protein localises to the cell membrane. Functionally, produces ATP from ADP in the presence of a proton gradient across the membrane. The gamma chain is believed to be important in regulating ATPase activity and the flow of protons through the CF(0) complex. The chain is ATP synthase gamma chain from Lactococcus lactis subsp. lactis (strain IL1403) (Streptococcus lactis).